A 200-amino-acid chain; its full sequence is Small ribosomal subunit protein uS4 (200 aa).

The segment at 22–43 is disordered; sequence TGKELERRPYAPGQHGPTQRKK. The S4 RNA-binding domain occupies 92–170; sequence QRLDNIVYRL…VPEYVTFDAE (79 aa).

It belongs to the universal ribosomal protein uS4 family. In terms of assembly, part of the 30S ribosomal subunit. Contacts protein S5. The interaction surface between S4 and S5 is involved in control of translational fidelity.

One of the primary rRNA binding proteins, it binds directly to 16S rRNA where it nucleates assembly of the body of the 30S subunit. Its function is as follows. With S5 and S12 plays an important role in translational accuracy. This chain is Small ribosomal subunit protein uS4, found in Listeria innocua serovar 6a (strain ATCC BAA-680 / CLIP 11262).